The following is an 853-amino-acid chain: DNA mismatch repair protein MutS (853 aa).

614-621 (GPNMGGKS) contributes to the ATP binding site.

It belongs to the DNA mismatch repair MutS family.

Its function is as follows. This protein is involved in the repair of mismatches in DNA. It is possible that it carries out the mismatch recognition step. This protein has a weak ATPase activity. This is DNA mismatch repair protein MutS from Escherichia coli (strain SE11).